A 1040-amino-acid polypeptide reads, in one-letter code: Multidrug resistance protein MdtB (1040 aa).

12 helical membrane passes run 16–36 (FIMRPVATTLLMVAILIAGII), 342–362 (DTQFELMLAMALVVMIIYVFL), 369–389 (IIPAVAVPLSLVGTFAVMVFL), 396–416 (LTLMALTIATGFVVDDAIVVI), 440–460 (IGFTIISLTFSLIAVLIPLLF), 472–492 (FAVTLAVAILISAVVSLTLTP), 537–557 (WATLSVALGTLALSVMLWIVI), 869–889 (LIVAAVVAMYIVLGVLYESFI), 890–910 (HPVTILSTLPTAGVGALLALM), 911–931 (LSGSELDVIAIIGIILLIGIV), 968–988 (ILMTTMAALLGALPLMLSTGV), and 998–1018 (IGMVGGLLVSQVLTLFTTPVI).

Belongs to the resistance-nodulation-cell division (RND) (TC 2.A.6) family. MdtB subfamily. Part of a tripartite efflux system composed of MdtA, MdtB and MdtC. MdtB forms a heteromultimer with MdtC.

It localises to the cell inner membrane. This is Multidrug resistance protein MdtB from Enterobacter sp. (strain 638).